A 362-amino-acid chain; its full sequence is Protein U8 (362 aa).

The protein belongs to the herpesviridae US22 family.

This is Protein U8 (U8) from Human herpesvirus 7 (strain JI) (HHV-7).